The primary structure comprises 304 residues: GTP cyclohydrolase FolE2 (304 aa).

Belongs to the GTP cyclohydrolase IV family.

The catalysed reaction is GTP + H2O = 7,8-dihydroneopterin 3'-triphosphate + formate + H(+). It participates in cofactor biosynthesis; 7,8-dihydroneopterin triphosphate biosynthesis; 7,8-dihydroneopterin triphosphate from GTP: step 1/1. Its function is as follows. Converts GTP to 7,8-dihydroneopterin triphosphate. The protein is GTP cyclohydrolase FolE2 of Bdellovibrio bacteriovorus (strain ATCC 15356 / DSM 50701 / NCIMB 9529 / HD100).